The following is a 492-amino-acid chain: Catalase-1 (492 aa).

Catalysis depends on residues His65 and Asn138. Tyr348 serves as a coordination point for heme.

The protein belongs to the catalase family. In terms of assembly, homotetramer and heterotetramer. At least six or seven isozymes are produced from a mixture of 3 gene products. Interacts with NCA1. Interacts with LSD1. Heme is required as a cofactor.

It localises to the cytoplasm. The catalysed reaction is 2 H2O2 = O2 + 2 H2O. Its function is as follows. Occurs in almost all aerobically respiring organisms and serves to protect cells from the toxic effects of hydrogen peroxide. The polypeptide is Catalase-1 (CAT1) (Arabidopsis thaliana (Mouse-ear cress)).